Here is a 362-residue protein sequence, read N- to C-terminus: Histidinol-phosphate aminotransferase (362 aa).

Residue Lys222 is modified to N6-(pyridoxal phosphate)lysine.

The protein belongs to the class-II pyridoxal-phosphate-dependent aminotransferase family. Histidinol-phosphate aminotransferase subfamily. Homodimer. Pyridoxal 5'-phosphate is required as a cofactor.

It catalyses the reaction L-histidinol phosphate + 2-oxoglutarate = 3-(imidazol-4-yl)-2-oxopropyl phosphate + L-glutamate. The protein operates within amino-acid biosynthesis; L-histidine biosynthesis; L-histidine from 5-phospho-alpha-D-ribose 1-diphosphate: step 7/9. This Shewanella amazonensis (strain ATCC BAA-1098 / SB2B) protein is Histidinol-phosphate aminotransferase.